The sequence spans 182 residues: uncharacterized protein (182 aa).

Belongs to the mimivirus L6/L7/L57 family.

This is an uncharacterized protein from Acanthamoeba polyphaga mimivirus (APMV).